Consider the following 577-residue polypeptide: Arginine--tRNA ligase (577 aa).

The short motif at 122-132 (PNVAKEMHVGH) is the 'HIGH' region element.

The protein belongs to the class-I aminoacyl-tRNA synthetase family. As to quaternary structure, monomer.

The protein localises to the cytoplasm. It carries out the reaction tRNA(Arg) + L-arginine + ATP = L-arginyl-tRNA(Arg) + AMP + diphosphate. This is Arginine--tRNA ligase from Salmonella newport (strain SL254).